Consider the following 615-residue polypeptide: Zinc metalloproteinase R519 (615 aa).

The Peptidase M13 domain maps to 1–611 (MTYRSCIPQN…LDPQLRSRIL (611 aa)). Position 454 (His454) interacts with Zn(2+). Glu455 is a catalytic residue. Zn(2+)-binding residues include His458 and Glu513. Asp517 acts as the Proton donor in catalysis.

This sequence belongs to the peptidase M13 family. Zn(2+) serves as cofactor.

Zinc metalloprotease. This is Zinc metalloproteinase R519 from Acanthamoeba polyphaga (Amoeba).